Here is a 377-residue protein sequence, read N- to C-terminus: UPF0754 membrane protein LMOf2365_2257 (377 aa).

A run of 2 helical transmembrane segments spans residues 1–21 and 357–377; these read MSVL…GAMT and YLGG…AMWI.

The protein belongs to the UPF0754 family.

Its subcellular location is the cell membrane. This Listeria monocytogenes serotype 4b (strain F2365) protein is UPF0754 membrane protein LMOf2365_2257.